The sequence spans 256 residues: Ribonuclease 3 (256 aa).

Positions 3–125 (LDALQQRLGY…IVGAVFLDAG (123 aa)) constitute an RNase III domain. Glutamate 38 contacts Mg(2+). The active site involves aspartate 42. Mg(2+) is bound by residues aspartate 111 and glutamate 114. Glutamate 114 is an active-site residue. The DRBM domain maps to 152–222 (DAKTLLQEYL…AKLALDEVQK (71 aa)). Residues 229–256 (KRSRAERTGKTRKQPQPQDPQLSLRLKE) are disordered.

This sequence belongs to the ribonuclease III family. Homodimer. Requires Mg(2+) as cofactor.

The protein resides in the cytoplasm. The catalysed reaction is Endonucleolytic cleavage to 5'-phosphomonoester.. In terms of biological role, digests double-stranded RNA. Involved in the processing of primary rRNA transcript to yield the immediate precursors to the large and small rRNAs (23S and 16S). Processes some mRNAs, and tRNAs when they are encoded in the rRNA operon. Processes pre-crRNA and tracrRNA of type II CRISPR loci if present in the organism. This Cupriavidus taiwanensis (strain DSM 17343 / BCRC 17206 / CCUG 44338 / CIP 107171 / LMG 19424 / R1) (Ralstonia taiwanensis (strain LMG 19424)) protein is Ribonuclease 3.